Here is a 203-residue protein sequence, read N- to C-terminus: Probable nicotinate-nucleotide adenylyltransferase (203 aa).

Belongs to the NadD family.

It catalyses the reaction nicotinate beta-D-ribonucleotide + ATP + H(+) = deamido-NAD(+) + diphosphate. The protein operates within cofactor biosynthesis; NAD(+) biosynthesis; deamido-NAD(+) from nicotinate D-ribonucleotide: step 1/1. Catalyzes the reversible adenylation of nicotinate mononucleotide (NaMN) to nicotinic acid adenine dinucleotide (NaAD). The sequence is that of Probable nicotinate-nucleotide adenylyltransferase from Dictyoglomus turgidum (strain DSM 6724 / Z-1310).